The chain runs to 147 residues: Large ribosomal subunit protein bL9 (147 aa).

The disordered stretch occupies residues 44-63 (VKTLDAQKRSEDKRKEQEKL). Over residues 48 to 63 (DAQKRSEDKRKEQEKL) the composition is skewed to basic and acidic residues.

This sequence belongs to the bacterial ribosomal protein bL9 family.

Functionally, binds to the 23S rRNA. This chain is Large ribosomal subunit protein bL9, found in Brevibacillus brevis (strain 47 / JCM 6285 / NBRC 100599).